A 145-amino-acid polypeptide reads, in one-letter code: D-aminoacyl-tRNA deacylase (145 aa).

The short motif at 137–138 (GP) is the Gly-cisPro motif, important for rejection of L-amino acids element.

Belongs to the DTD family. In terms of assembly, homodimer.

The protein resides in the cytoplasm. It carries out the reaction glycyl-tRNA(Ala) + H2O = tRNA(Ala) + glycine + H(+). The enzyme catalyses a D-aminoacyl-tRNA + H2O = a tRNA + a D-alpha-amino acid + H(+). Its function is as follows. An aminoacyl-tRNA editing enzyme that deacylates mischarged D-aminoacyl-tRNAs. Also deacylates mischarged glycyl-tRNA(Ala), protecting cells against glycine mischarging by AlaRS. Acts via tRNA-based rather than protein-based catalysis; rejects L-amino acids rather than detecting D-amino acids in the active site. By recycling D-aminoacyl-tRNA to D-amino acids and free tRNA molecules, this enzyme counteracts the toxicity associated with the formation of D-aminoacyl-tRNA entities in vivo and helps enforce protein L-homochirality. This Legionella pneumophila (strain Lens) protein is D-aminoacyl-tRNA deacylase.